Here is a 485-residue protein sequence, read N- to C-terminus: Glutamyl-tRNA(Gln) amidotransferase subunit A (485 aa).

Catalysis depends on charge relay system residues Lys-78 and Ser-153. Ser-177 functions as the Acyl-ester intermediate in the catalytic mechanism.

This sequence belongs to the amidase family. GatA subfamily. In terms of assembly, heterotrimer of A, B and C subunits.

It catalyses the reaction L-glutamyl-tRNA(Gln) + L-glutamine + ATP + H2O = L-glutaminyl-tRNA(Gln) + L-glutamate + ADP + phosphate + H(+). Functionally, allows the formation of correctly charged Gln-tRNA(Gln) through the transamidation of misacylated Glu-tRNA(Gln) in organisms which lack glutaminyl-tRNA synthetase. The reaction takes place in the presence of glutamine and ATP through an activated gamma-phospho-Glu-tRNA(Gln). The chain is Glutamyl-tRNA(Gln) amidotransferase subunit A from Bacillus cereus (strain ATCC 14579 / DSM 31 / CCUG 7414 / JCM 2152 / NBRC 15305 / NCIMB 9373 / NCTC 2599 / NRRL B-3711).